The chain runs to 584 residues: Probable terpene synthase 9 (584 aa).

Mg(2+) is bound by residues D339, D343, and E491. A DDXXD motif motif is present at residues 339–343 (DDMYD).

The protein belongs to the terpene synthase family. Mg(2+) serves as cofactor.

In terms of biological role, probable sesquiterpene synthase. This is Probable terpene synthase 9 (TPS9) from Ricinus communis (Castor bean).